The sequence spans 382 residues: Hyaluronidase (382 aa).

Positions 1 to 28 (MSRPLVITEGMMIGVLLMLAPINALLLG) form a signal peptide, or 24. The propeptide occupies 29 to 33 (FVQST). Cystine bridges form between Cys54–Cys345 and Cys221–Cys233. An N-linked (GlcNAc...) asparagine glycan is attached at Asn115. The Proton donor role is filled by Glu145. A glycan (N-linked (GlcNAc...) (complex) asparagine) is linked at Asn263.

It belongs to the glycosyl hydrolase 56 family. Homotetramer. In terms of processing, N-glycosylated. Glycans found include a majority of small oligosaccharides (Man1-3GlcNAc2), most of which are either alpha 1,3-monofucosylated or alpha 1,3-(alpha 1,6-)difucosylated at the innermost GlcNAc residue, approximately 5% of high-mannose type structures, and 8% contains the terminal trisaccharide GalNAc beta 1-4[Fuc alpha 1-3]GlcNAc beta 1-in beta 1,2-linkage to the core alpha 1,3-mannosyl residue. Expressed in the venom glands of worker bees. It is also detected in the testes of drones but not in the queen-bee venom glands or in pupae.

It localises to the secreted. The enzyme catalyses Random hydrolysis of (1-&gt;4)-linkages between N-acetyl-beta-D-glucosamine and D-glucuronate residues in hyaluronate.. Hydrolyzes high molecular weight hyaluronic acid to produce small oligosaccharides. This chain is Hyaluronidase, found in Apis mellifera (Honeybee).